A 100-amino-acid polypeptide reads, in one-letter code: MAKKSMIARDVKRKKTVERYAAKRAALMAAFNAAEDPMDRLEIHRKIQALPRNSARIRVRNRCWATGKPRGVYRDFGLCRNQLRERAHKGELPGVVKSSW.

This sequence belongs to the universal ribosomal protein uS14 family. Part of the 30S ribosomal subunit. Contacts proteins S3 and S10.

In terms of biological role, binds 16S rRNA, required for the assembly of 30S particles and may also be responsible for determining the conformation of the 16S rRNA at the A site. The chain is Small ribosomal subunit protein uS14 from Synechococcus sp. (strain CC9605).